The following is a 1497-amino-acid chain: Dual oxidase 1 (1497 aa).

The first 21 residues, 1 to 21 (MRSKHVLYIAILFSSIFGGKG), serve as a signal peptide directing secretion. The Extracellular portion of the chain corresponds to 22-587 (IQQNEEFQRY…MQSTYWTDND (566 aa)). The interval 26–590 (EEFQRYDGWY…TYWTDNDTTY (565 aa)) is peroxidase-like; mediates peroxidase activity. N-linked (GlcNAc...) asparagine glycans are attached at residues Asn-66, Asn-305, Asn-567, and Asn-586. The chain crosses the membrane as a helical span at residues 588–608 (TTYVFTLIGLACVPLICYGIG). Residues 609-986 (RYLVNRRIAI…VSAFLETYRQ (378 aa)) lie on the Cytoplasmic side of the membrane. EF-hand domains are found at residues 817–852 (ANNE…FVNA) and 853–888 (PQKQ…LNQT). Residues 987–1007 (HVFIVFCFVAINLVLFFERFW) traverse the membrane as a helical segment. The Extracellular segment spans residues 1008-1024 (HYRYMAENRDLRRVMGA). A helical membrane pass occupies residues 1025–1045 (GIAITRGAAGALSFCMALILL). The Ferric oxidoreductase domain occupies 1030–1210 (RGAAGALSFC…FVIDRIIGLM (181 aa)). Residues 1046 to 1068 (TVCRNIITLLRETVIAQYIPFDS) lie on the Cytoplasmic side of the membrane. Residues 1069 to 1089 (AIAFHKIVALFAAFWATLHTV) traverse the membrane as a helical segment. The Extracellular portion of the chain corresponds to 1090–1134 (GHCVNFYHVGTQSQEGLACLFQEAFFGSNFLPSISYWFFSTITGL). A helical transmembrane segment spans residues 1135–1155 (TGIALVAVMCIIYVFALPCFI). Topologically, residues 1156 to 1163 (KRAYHAFR) are cytoplasmic. The helical transmembrane segment at 1164–1184 (LTHLLNIAFYALTLLHGLPKL) threads the bilayer. Residues 1185–1189 (LDSPK) are Extracellular-facing. The chain crosses the membrane as a helical span at residues 1190–1210 (FGYYVVGPIVLFVIDRIIGLM). One can recognise an FAD-binding FR-type domain in the interval 1211 to 1318 (QYYKKLEIVN…KGPYGDGNQE (108 aa)). Topologically, residues 1211–1497 (QYYKKLEIVN…PSFAHRFETF (287 aa)) are cytoplasmic.

In the N-terminal section; belongs to the peroxidase family. As to quaternary structure, interacts with doxa-1 and tsp-15. Interacts with rho-1. In terms of tissue distribution, expressed in hypodermal cells.

The protein resides in the membrane. The enzyme catalyses NADH + O2 + H(+) = H2O2 + NAD(+). It carries out the reaction NADPH + O2 + H(+) = H2O2 + NADP(+). Its activity is regulated as follows. Peroxidase activity is inhibited by aminobenzohydrazide. Plays a role in cuticle biogenesis. In complex with doxa-1 and tsp-15, produces reactive oxygen species (ROS), which are probably used by mlt-7 for tyrosine cross-linking, thus stabilizing cuticular extracellular matrix. May regulate the production of ROS by playing a role in modulating proline catabolism. Required in combination with mlt-7 for correct formation of cross-links in cuticle collagens. Association with the GTPase rho-1 promotes ROS production and this interaction may be modulated by memo-1, in order to control the oxidative stress response and longevity. This Caenorhabditis elegans protein is Dual oxidase 1.